Reading from the N-terminus, the 230-residue chain is Type II restriction enzyme NlaIII (230 aa).

It carries out the reaction Endonucleolytic cleavage of DNA to give specific double-stranded fragments with terminal 5'-phosphates.. A P subtype restriction enzyme that recognizes the double-stranded sequence 5'-CATG-3' and cleaves after G-4. The sequence is that of Type II restriction enzyme NlaIII (nlaIIIR) from Neisseria lactamica.